A 427-amino-acid polypeptide reads, in one-letter code: Glutamate-1-semialdehyde 2,1-aminomutase (427 aa).

Residue Lys-269 is modified to N6-(pyridoxal phosphate)lysine.

This sequence belongs to the class-III pyridoxal-phosphate-dependent aminotransferase family. HemL subfamily. As to quaternary structure, homodimer. It depends on pyridoxal 5'-phosphate as a cofactor.

Its subcellular location is the cytoplasm. The catalysed reaction is (S)-4-amino-5-oxopentanoate = 5-aminolevulinate. It participates in porphyrin-containing compound metabolism; protoporphyrin-IX biosynthesis; 5-aminolevulinate from L-glutamyl-tRNA(Glu): step 2/2. In Thermus thermophilus (strain ATCC BAA-163 / DSM 7039 / HB27), this protein is Glutamate-1-semialdehyde 2,1-aminomutase.